Here is a 295-residue protein sequence, read N- to C-terminus: Nucleotide-binding protein LACR_1047 (295 aa).

An ATP-binding site is contributed by 12–19; sequence GMSGAGKT. 63-66 provides a ligand contact to GTP; it reads DMRS.

It belongs to the RapZ-like family.

Functionally, displays ATPase and GTPase activities. This Lactococcus lactis subsp. cremoris (strain SK11) protein is Nucleotide-binding protein LACR_1047.